The chain runs to 468 residues: Mothers against decapentaplegic homolog 1 (468 aa).

Met1 carries the N-acetylmethionine modification. An MH1 domain is found at 12 to 136 (PAVKRLLGWK…YKRVESPVLP (125 aa)). 4 residues coordinate Zn(2+): Cys64, Cys109, Cys121, and His126. Residues 162–246 (NEPHMPLNAT…DGSQPMDTNM (85 aa)) are disordered. Positions 188-210 (PNSSYPNSPGSSSSTYPHSPTSS) are enriched in low complexity. A compositionally biased stretch (pro residues) spans 221-232 (DTPPPAYLPPED). Polar residues predominate over residues 237–246 (DGSQPMDTNM). Positions 274-468 (WCSIVYYELN…SPHNPISSVS (195 aa)) constitute an MH2 domain. Position 325 is a phosphothreonine; by MINK1, TNIK and MAP4K4 (Thr325). The L3 loop stretch occupies residues 421 to 431 (KGWGAEYHRQD). Ser466 and Ser468 each carry phosphoserine.

This sequence belongs to the dwarfin/SMAD family. As to quaternary structure, found in a complex with SMAD4 and YY1. Interacts with HGS, NANOG and ZCCHC12. Upon C-terminus phosphorylation: forms trimers with another SMAD1 and the co-SMAD SMAD4. Interacts with PEBP2-alpha subunit, CREB-binding protein (CBP), p300, SMURF1, SMURF2, USP15 and HOXC8. Associates with ZNF423 or ZNF521 in response to BMP2 leading to activate transcription of BMP target genes. Interacts with SKOR1. Interacts (via MH2 domain) with LEMD3. Binding to LEMD3 results in at least a partial reduction of receptor-mediated phosphorylation. Forms a ternary complex with PSMB4 and OAZ1 before PSMB4 is incorporated into the 20S proteasome. Interacts (via MH2 domain) with FAM83G (via MH2 domain); in a SMAD4-independent manner. Interacts with ZC3H3. Interacts with TMEM119. Interacts (via MH1 and MH2 domains) with ZNF8. Interacts with RANBP3L; the interaction increases when SMAD1 is not phosphorylated and mediates SMAD1 nuclear export. Interacts with EGR1; this interaction inhibits SMAD1 dephosphorylation. Interacts with SMAD6. Interacts with YAP1. Interacts with MTMR4; negatively regulates BMP signaling through SMAD1 dephosphorylation and retention in endosomes. Phosphorylation of the C-terminal SVS motif by BMP type 1 receptor kinase activates SMAD1 by promoting dissociation from the receptor and trimerization with SMAD4. Phosphorylation by ERK2 MAP kinase in response to EGF or HGF prevents SMAD1 nuclear accumulation and transcriptional activity in response to BMP. Dephosphorylation, probably by PPM1A, induces its export from the nucleus to the cytoplasm. Dephosphorylation is inhibited by association with EGR1. Phosphorylation by CDK8/9 creates binding sites for YAP1, and subsequent phosphorylation by GSK3 switches off YAP1 binding and adds binding sites for SMURF1. Post-translationally, ubiquitinated by SMAD-specific E3 ubiquitin ligase SMURF1, leading to its degradation. Monoubiquitinated, leading to prevent DNA-binding. Deubiquitination by USP15 alleviates inhibition and promotes activation of TGF-beta target genes. Dephosphorylation, probably by PPM1A, induces its export from the nucleus to the cytoplasm. Phospho-SMAD1 is ubiquitinated by CHIP leading to disruption of the SMAD1-SMAD4 complex. As to expression, ubiquitous; present in liver, lung, stomach and spleen with lower level in heart, testes and skeletal muscle.

The protein resides in the cytoplasm. It is found in the nucleus. Its function is as follows. Transcriptional modulator that plays a role in various cellular processes, including embryonic development, cell differentiation, and tissue homeostasis. Upon BMP ligand binding to their receptors at the cell surface, is phosphorylated by activated type I BMP receptors (BMPRIs) and associates with SMAD4 to form an heteromeric complex which translocates into the nucleus acting as transcription factor. In turn, the hetero-trimeric complex recognizes cis-regulatory elements containing Smad Binding Elements (SBEs) to modulate the outcome of the signaling network. SMAD1/OAZ1/PSMB4 complex mediates the degradation of the CREBBP/EP300 repressor SNIP1. Positively regulates BMP4-induced expression of odontogenic development regulator MSX1 following IPO7-mediated nuclear import. This Rattus norvegicus (Rat) protein is Mothers against decapentaplegic homolog 1 (Smad1).